The sequence spans 503 residues: Alpha-1-syntrophin (503 aa).

PH domains lie at 6-263 (RAPR…AQIG) and 287-399 (DIKQ…DGCH). The segment at 40 to 68 (LTVSPADGEPGPEPEPAQLNGAAEPGAAP) is disordered. One can recognise a PDZ domain in the interval 81–164 (RVTVRKADAG…EVVLEVKYMK (84 aa)). Ser95, Ser178, Ser183, Ser187, and Ser194 each carry phosphoserine. The tract at residues 177 to 203 (TSVGWDSPPASPLQRQPSSPGPQPRNL) is disordered. An SU domain is found at 447–503 (PFEKLQMSSDDGTSLLFLDFGGAEGEIQLDLHSCPKTMVFIIHSFLSAKVTRLGLLA). Positions 481–503 (PKTMVFIIHSFLSAKVTRLGLLA) are calmodulin-binding.

It belongs to the syntrophin family. In terms of assembly, monomer and homodimer. Interacts with MAPK12, TGFA, GA and F-actin. Interacts with the other members of the syntrophin family: SNTB1 and SNTB2; with dystrophin protein DMD and related proteins DTNA and UTRN; SGCG and SGCA of the dystrophin glycoprotein complex; NOS1; GRB2; calmodulin and the sodium channel proteins SCN4A and SCN5A. Interacts with MYOC; regulates muscle hypertrophy. Interacts with DTNB. In terms of processing, phosphorylated by CaM-kinase II. Phosphorylation may inhibit the interaction with DMD. In terms of tissue distribution, high expression in skeletal muscle. Expressed at intermediate level in heart, kidney and brain, and at low level in intestine, liver, lung and testis.

It localises to the cell membrane. It is found in the sarcolemma. The protein localises to the cell junction. Its subcellular location is the cytoplasm. The protein resides in the cytoskeleton. Functionally, adapter protein that binds to and probably organizes the subcellular localization of a variety of membrane proteins. May link various receptors to the actin cytoskeleton and the extracellular matrix via the dystrophin glycoprotein complex. Plays an important role in synapse formation and in the organization of UTRN and acetylcholine receptors at the neuromuscular synapse. Binds to phosphatidylinositol 4,5-bisphosphate. This is Alpha-1-syntrophin (Snta1) from Mus musculus (Mouse).